The primary structure comprises 66 residues: Nigrocin-2GRa (66 aa).

An N-terminal signal peptide occupies residues 1-22; it reads MFTLKKSQLLLFFPGTINLSLC. Positions 23–45 are excised as a propeptide; sequence QDETNAEEERRDEEVAKMEEIKR. The cysteines at positions 60 and 66 are disulfide-linked.

Expressed by the skin glands.

The protein localises to the secreted. Functionally, antimicrobial peptide active at least against the Gram-positive bacterium S.aureus but with otherwise unclear activity spectrum. Lacks hemolytic activity against rabbit or human erythrocytes. The chain is Nigrocin-2GRa from Odorrana grahami (Yunnanfu frog).